The chain runs to 413 residues: Aspartate aminotransferase, cytoplasmic (413 aa).

3 residues coordinate L-aspartate: Gly-39, Trp-141, and Asn-195. The residue at position 259 (Lys-259) is an N6-(pyridoxal phosphate)lysine. Position 387 (Arg-387) interacts with L-aspartate.

It belongs to the class-I pyridoxal-phosphate-dependent aminotransferase family. In terms of assembly, homodimer. Pyridoxal 5'-phosphate serves as cofactor.

The protein localises to the cytoplasm. The enzyme catalyses L-aspartate + 2-oxoglutarate = oxaloacetate + L-glutamate. The catalysed reaction is L-cysteine + 2-oxoglutarate = 2-oxo-3-sulfanylpropanoate + L-glutamate. It catalyses the reaction (2S)-2-aminobutanoate + 2-oxoglutarate = 2-oxobutanoate + L-glutamate. It carries out the reaction 3-sulfino-L-alanine + 2-oxoglutarate = 3-sulfinopyruvate + L-glutamate. Functionally, biosynthesis of L-glutamate from L-aspartate or L-cysteine. Important regulator of levels of glutamate, the major excitatory neurotransmitter of the vertebrate central nervous system. Acts as a scavenger of glutamate in brain neuroprotection. The aspartate aminotransferase activity is involved in hepatic glucose synthesis during development and in adipocyte glyceroneogenesis. Using L-cysteine as substrate, regulates levels of mercaptopyruvate, an important source of hydrogen sulfide. Mercaptopyruvate is converted into H(2)S via the action of 3-mercaptopyruvate sulfurtransferase (3MST). Hydrogen sulfide is an important synaptic modulator and neuroprotectant in the brain. The chain is Aspartate aminotransferase, cytoplasmic from Sus scrofa (Pig).